A 269-amino-acid chain; its full sequence is Diphthine synthase (269 aa).

Residues Leu10, Asp87, Val90, 115 to 116, Leu166, Ala209, and His234 each bind S-adenosyl-L-methionine; that span reads SI.

Belongs to the diphthine synthase family. As to quaternary structure, homodimer.

The enzyme catalyses 2-[(3S)-amino-3-carboxypropyl]-L-histidyl-[translation elongation factor 2] + 3 S-adenosyl-L-methionine = diphthine-[translation elongation factor 2] + 3 S-adenosyl-L-homocysteine + 3 H(+). It functions in the pathway protein modification; peptidyl-diphthamide biosynthesis. Its function is as follows. S-adenosyl-L-methionine-dependent methyltransferase that catalyzes the trimethylation of the amino group of the modified target histidine residue in translation elongation factor 2 (EF-2), to form an intermediate called diphthine. The three successive methylation reactions represent the second step of diphthamide biosynthesis. This Pyrococcus furiosus (strain ATCC 43587 / DSM 3638 / JCM 8422 / Vc1) protein is Diphthine synthase.